The primary structure comprises 270 residues: Phosphatidylglycerol--prolipoprotein diacylglyceryl transferase (270 aa).

Helical transmembrane passes span 19–39, 56–76, 92–112, and 116–136; these read FPVY…LWLA, LVLI…VIFE, QGGL…ILFA, and GVSF…GQAI. Arg-138 lines the a 1,2-diacyl-sn-glycero-3-phospho-(1'-sn-glycerol) pocket. The next 3 helical transmembrane spans lie at 178-198, 206-226, and 236-256; these read HPTF…LLAL, GELF…VEGL, and LRIA…FIIV.

Belongs to the Lgt family.

It is found in the cell membrane. It catalyses the reaction L-cysteinyl-[prolipoprotein] + a 1,2-diacyl-sn-glycero-3-phospho-(1'-sn-glycerol) = an S-1,2-diacyl-sn-glyceryl-L-cysteinyl-[prolipoprotein] + sn-glycerol 1-phosphate + H(+). Its pathway is protein modification; lipoprotein biosynthesis (diacylglyceryl transfer). Catalyzes the transfer of the diacylglyceryl group from phosphatidylglycerol to the sulfhydryl group of the N-terminal cysteine of a prolipoprotein, the first step in the formation of mature lipoproteins. In Bacillus anthracis (strain A0248), this protein is Phosphatidylglycerol--prolipoprotein diacylglyceryl transferase.